Consider the following 201-residue polypeptide: MIGRLHGKIIEKQPPEMVIDVQGVGYEVLLPMTSFYSLPQIGEEATIFTHLVVREDAHLLFGFAQKQDRTLFRELIKTNGVGPKLALAILSAMSVSQFANAVEHEELAKLTKIPGIGRKTAERLLVELKGKFKGVAQSDFFEEHSVETIVATHSHDPADEARDALVALGYKLADAEKMIKKVNKAGATSEQLIREALKASL.

The tract at residues 1-64 (MIGRLHGKII…EDAHLLFGFA (64 aa)) is domain I. The segment at 65–143 (QKQDRTLFRE…GVAQSDFFEE (79 aa)) is domain II. The tract at residues 144–154 (HSVETIVATHS) is flexible linker. Residues 154-201 (SHDPADEARDALVALGYKLADAEKMIKKVNKAGATSEQLIREALKASL) are domain III.

This sequence belongs to the RuvA family. As to quaternary structure, homotetramer. Forms an RuvA(8)-RuvB(12)-Holliday junction (HJ) complex. HJ DNA is sandwiched between 2 RuvA tetramers; dsDNA enters through RuvA and exits via RuvB. An RuvB hexamer assembles on each DNA strand where it exits the tetramer. Each RuvB hexamer is contacted by two RuvA subunits (via domain III) on 2 adjacent RuvB subunits; this complex drives branch migration. In the full resolvosome a probable DNA-RuvA(4)-RuvB(12)-RuvC(2) complex forms which resolves the HJ.

It localises to the cytoplasm. Its function is as follows. The RuvA-RuvB-RuvC complex processes Holliday junction (HJ) DNA during genetic recombination and DNA repair, while the RuvA-RuvB complex plays an important role in the rescue of blocked DNA replication forks via replication fork reversal (RFR). RuvA specifically binds to HJ cruciform DNA, conferring on it an open structure. The RuvB hexamer acts as an ATP-dependent pump, pulling dsDNA into and through the RuvAB complex. HJ branch migration allows RuvC to scan DNA until it finds its consensus sequence, where it cleaves and resolves the cruciform DNA. The sequence is that of Holliday junction branch migration complex subunit RuvA from Actinobacillus pleuropneumoniae serotype 7 (strain AP76).